The primary structure comprises 405 residues: Acetate kinase (405 aa).

N7 lines the Mg(2+) pocket. K14 provides a ligand contact to ATP. A substrate-binding site is contributed by R99. Residue D156 is the Proton donor/acceptor of the active site. H215–G219 lines the ATP pocket. E391 serves as a coordination point for Mg(2+).

The protein belongs to the acetokinase family. In terms of assembly, homodimer. It depends on Mg(2+) as a cofactor. Mn(2+) is required as a cofactor.

The protein resides in the cytoplasm. The enzyme catalyses acetate + ATP = acetyl phosphate + ADP. It functions in the pathway metabolic intermediate biosynthesis; acetyl-CoA biosynthesis; acetyl-CoA from acetate: step 1/2. In terms of biological role, catalyzes the formation of acetyl phosphate from acetate and ATP. Can also catalyze the reverse reaction. This Nostoc sp. (strain PCC 7120 / SAG 25.82 / UTEX 2576) protein is Acetate kinase.